A 310-amino-acid chain; its full sequence is tRNA dimethylallyltransferase (310 aa).

13 to 20 lines the ATP pocket; the sequence is GPTASGKT. Position 15–20 (15–20) interacts with substrate; sequence TASGKT. Interaction with substrate tRNA stretches follow at residues 38–41, 162–166, 243–248, and 276–283; these read DSAL, QRLSR, RCVGYR, and KRQITWLR.

The protein belongs to the IPP transferase family. Monomer. The cofactor is Mg(2+).

It carries out the reaction adenosine(37) in tRNA + dimethylallyl diphosphate = N(6)-dimethylallyladenosine(37) in tRNA + diphosphate. Its function is as follows. Catalyzes the transfer of a dimethylallyl group onto the adenine at position 37 in tRNAs that read codons beginning with uridine, leading to the formation of N6-(dimethylallyl)adenosine (i(6)A). The sequence is that of tRNA dimethylallyltransferase from Aliivibrio fischeri (strain ATCC 700601 / ES114) (Vibrio fischeri).